The chain runs to 337 residues: Viral cathepsin (337 aa).

The first 19 residues, 1-19, serve as a signal peptide directing secretion; sequence MTLLMIFTILLVASSQIEG. Residues 20-126 constitute a propeptide, activation peptide; sequence HLKFDIHDAQ…DAPPDVHDEL (107 aa). 3 disulfides stabilise this stretch: C147–C188, C181–C221, and C276–C324. The active site involves C150. N172 is a glycosylation site (N-linked (GlcNAc...) asparagine; by host). Residues H283 and N303 contribute to the active site.

Belongs to the peptidase C1 family. In terms of processing, synthesized as an inactive proenzyme and activated by proteolytic removal of the inhibitory propeptide.

The enzyme catalyses Endopeptidase of broad specificity, hydrolyzing substrates of both cathepsin L and cathepsin B.. Its function is as follows. Cysteine protease that plays an essential role in host liquefaction to facilitate horizontal transmission of the virus. May participate in the degradation of foreign protein expressed by the baculovirus system. The chain is Viral cathepsin (VCATH) from Adoxophyes honmai (Smaller tea tortrix moth).